Reading from the N-terminus, the 246-residue chain is 3-deoxy-manno-octulosonate cytidylyltransferase (246 aa).

Belongs to the KdsB family.

It localises to the cytoplasm. It catalyses the reaction 3-deoxy-alpha-D-manno-oct-2-ulosonate + CTP = CMP-3-deoxy-beta-D-manno-octulosonate + diphosphate. It participates in nucleotide-sugar biosynthesis; CMP-3-deoxy-D-manno-octulosonate biosynthesis; CMP-3-deoxy-D-manno-octulosonate from 3-deoxy-D-manno-octulosonate and CTP: step 1/1. It functions in the pathway bacterial outer membrane biogenesis; lipopolysaccharide biosynthesis. Functionally, activates KDO (a required 8-carbon sugar) for incorporation into bacterial lipopolysaccharide in Gram-negative bacteria. The sequence is that of 3-deoxy-manno-octulosonate cytidylyltransferase from Rickettsia conorii (strain ATCC VR-613 / Malish 7).